The sequence spans 209 residues: Uracil phosphoribosyltransferase (209 aa).

Residues Arg79, Arg104, and 131–139 (DPMLATGGS) contribute to the 5-phospho-alpha-D-ribose 1-diphosphate site. Residues Ile194 and 199–201 (GDA) each bind uracil. Residue Asp200 participates in 5-phospho-alpha-D-ribose 1-diphosphate binding.

The protein belongs to the UPRTase family. It depends on Mg(2+) as a cofactor.

The catalysed reaction is UMP + diphosphate = 5-phospho-alpha-D-ribose 1-diphosphate + uracil. It functions in the pathway pyrimidine metabolism; UMP biosynthesis via salvage pathway; UMP from uracil: step 1/1. Its activity is regulated as follows. Allosterically activated by GTP. Functionally, catalyzes the conversion of uracil and 5-phospho-alpha-D-ribose 1-diphosphate (PRPP) to UMP and diphosphate. The sequence is that of Uracil phosphoribosyltransferase from Clostridium beijerinckii (strain ATCC 51743 / NCIMB 8052) (Clostridium acetobutylicum).